The primary structure comprises 520 residues: Peptide chain release factor 3 (520 aa).

Residues 8 to 277 form the tr-type G domain; the sequence is ESRKTFAIIS…FAPMPNARQT (270 aa). GTP is bound by residues 17-24, 85-89, and 139-142; these read SHPDAGKT, DTPGH, and NKLD.

This sequence belongs to the TRAFAC class translation factor GTPase superfamily. Classic translation factor GTPase family. PrfC subfamily.

It is found in the cytoplasm. Increases the formation of ribosomal termination complexes and stimulates activities of RF-1 and RF-2. It binds guanine nucleotides and has strong preference for UGA stop codons. It may interact directly with the ribosome. The stimulation of RF-1 and RF-2 is significantly reduced by GTP and GDP, but not by GMP. The protein is Peptide chain release factor 3 of Staphylococcus aureus (strain JH1).